Here is a 270-residue protein sequence, read N- to C-terminus: 4-hydroxy-tetrahydrodipicolinate reductase (270 aa).

NAD(+)-binding positions include 9 to 14 and Glu-35; that span reads GAGGRM. Residue Arg-36 participates in NADP(+) binding. Residues 99–101 and 123–126 each bind NAD(+); these read GTT and ASNF. The active-site Proton donor/acceptor is His-156. His-157 lines the (S)-2,3,4,5-tetrahydrodipicolinate pocket. Lys-160 acts as the Proton donor in catalysis. 166 to 167 lines the (S)-2,3,4,5-tetrahydrodipicolinate pocket; sequence GT.

This sequence belongs to the DapB family.

Its subcellular location is the cytoplasm. The enzyme catalyses (S)-2,3,4,5-tetrahydrodipicolinate + NAD(+) + H2O = (2S,4S)-4-hydroxy-2,3,4,5-tetrahydrodipicolinate + NADH + H(+). It catalyses the reaction (S)-2,3,4,5-tetrahydrodipicolinate + NADP(+) + H2O = (2S,4S)-4-hydroxy-2,3,4,5-tetrahydrodipicolinate + NADPH + H(+). The protein operates within amino-acid biosynthesis; L-lysine biosynthesis via DAP pathway; (S)-tetrahydrodipicolinate from L-aspartate: step 4/4. Functionally, catalyzes the conversion of 4-hydroxy-tetrahydrodipicolinate (HTPA) to tetrahydrodipicolinate. The polypeptide is 4-hydroxy-tetrahydrodipicolinate reductase (Haemophilus influenzae (strain PittEE)).